The sequence spans 505 residues: L-carnitine/gamma-butyrobetaine antiporter (505 aa).

12 helical membrane-spanning segments follow: residues 10 to 30 (IEPK…WLTV), 51 to 71 (WGWA…WLVF), 92 to 112 (IFMM…SIEI), 143 to 163 (GPLP…FFFV), 195 to 215 (FYLV…TPLV), 231 to 251 (LDAI…ACGL), 263 to 283 (SYLS…SFIM), 316 to 336 (WTVF…IFLA), 347 to 367 (LCFG…TVLG), 403 to 423 (LSTA…VTLI), 446 to 466 (LLVR…LLAL), and 475 to 495 (AIIA…LSFI).

Belongs to the BCCT transporter (TC 2.A.15) family. CaiT subfamily. Homotrimer.

The protein resides in the cell inner membrane. It catalyses the reaction 4-(trimethylamino)butanoate(in) + (R)-carnitine(out) = 4-(trimethylamino)butanoate(out) + (R)-carnitine(in). Its pathway is amine and polyamine metabolism; carnitine metabolism. Functionally, catalyzes the exchange of L-carnitine for gamma-butyrobetaine. The sequence is that of L-carnitine/gamma-butyrobetaine antiporter from Salmonella paratyphi A (strain ATCC 9150 / SARB42).